The primary structure comprises 190 residues: GMP synthase [glutamine-hydrolyzing] subunit A (190 aa).

The Glutamine amidotransferase type-1 domain maps to 2-189 (TILVINNKGQ…YEICKKRCNN (188 aa)). Catalysis depends on cysteine 76, which acts as the Nucleophile. Catalysis depends on residues histidine 163 and glutamate 165.

In terms of assembly, heterodimer composed of a glutamine amidotransferase subunit (A) and a GMP-binding subunit (B).

The enzyme catalyses XMP + L-glutamine + ATP + H2O = GMP + L-glutamate + AMP + diphosphate + 2 H(+). It functions in the pathway purine metabolism; GMP biosynthesis; GMP from XMP (L-Gln route): step 1/1. Catalyzes the synthesis of GMP from XMP. This is GMP synthase [glutamine-hydrolyzing] subunit A from Methanobrevibacter smithii (strain ATCC 35061 / DSM 861 / OCM 144 / PS).